Consider the following 485-residue polypeptide: NADH-quinone oxidoreductase subunit N (485 aa).

The next 14 membrane-spanning stretches (helical) occupy residues 8–28 (LIAL…MLSI), 35–55 (FLNA…LWFV), 71–91 (GFAM…CTFA), 105–125 (FYLL…ANHL), 127–147 (SLFL…GYAF), 159–179 (YTIL…LVYA), 203–223 (LLAG…LVPF), 235–255 (PAPV…GVVM), 271–291 (VVLA…ALSQ), 297–317 (LLGY…IALQ), 326–346 (VGVY…VVSL), 373–393 (AAVM…LGFI), 408–430 (WWLV…RVAV), and 455–475 (IVVL…QPLI).

Belongs to the complex I subunit 2 family. As to quaternary structure, NDH-1 is composed of 13 different subunits. Subunits NuoA, H, J, K, L, M, N constitute the membrane sector of the complex.

It is found in the cell inner membrane. The catalysed reaction is a quinone + NADH + 5 H(+)(in) = a quinol + NAD(+) + 4 H(+)(out). In terms of biological role, NDH-1 shuttles electrons from NADH, via FMN and iron-sulfur (Fe-S) centers, to quinones in the respiratory chain. The immediate electron acceptor for the enzyme in this species is believed to be ubiquinone. Couples the redox reaction to proton translocation (for every two electrons transferred, four hydrogen ions are translocated across the cytoplasmic membrane), and thus conserves the redox energy in a proton gradient. In Escherichia coli O81 (strain ED1a), this protein is NADH-quinone oxidoreductase subunit N.